Consider the following 714-residue polypeptide: GATA zinc finger domain-containing protein 10 (714 aa).

Disordered stretches follow at residues 28-97 (YIQQ…NKQI), 115-180 (TMPH…QQQQ), 266-362 (MPMN…QQQQ), 394-419 (QQQQ…ESMD), 454-476 (MHLQ…QQIQ), and 528-621 (IQQQ…RRRT). Composition is skewed to low complexity over residues 30-94 (QQQQ…NNNN) and 130-147 (QQQQ…QHPH). Over residues 148 to 168 (QQQHPHQQQHPHQQQHPHQQQ) the composition is skewed to basic residues. Positions 169–180 (HPHQQQIQQQQQ) are enriched in low complexity. Positions 271-282 (GGNSRKNSFDMY) are enriched in polar residues. Composition is skewed to low complexity over residues 283-322 (NNNN…NNNI) and 340-362 (QHQQ…QQQQ). 2 stretches are compositionally biased toward low complexity: residues 457–476 (QQQQ…QQIQ) and 528–549 (IQQQ…TPNN). Residues 550 to 569 (GSPSSSDGKSPVNSNTAITS) are compositionally biased toward polar residues. The span at 570–588 (NNNNNNNNNNNNNNNNNNN) shows a compositional bias: low complexity. The GATA-type zinc-finger motif lies at 631–656 (CHYCEVTETPEWRRGPDGDHTLCNAC). Residues 661-694 (AKSQKKLAREKELEKQKELEREKERENTRKHSID) adopt a coiled-coil conformation. The segment covering 667-693 (LAREKELEKQKELEREKERENTRKHSI) has biased composition (basic and acidic residues). A disordered region spans residues 667–714 (LAREKELEKQKELEREKERENTRKHSIDFMLMNDTSSAPTNSQNPTPN). Residues 699-714 (NDTSSAPTNSQNPTPN) are compositionally biased toward polar residues.

This chain is GATA zinc finger domain-containing protein 10 (gtaJ), found in Dictyostelium discoideum (Social amoeba).